A 673-amino-acid chain; its full sequence is MDRIKAKINELKQKLDQWNYEYYVLDDPSVPDHVYDQAMRELIELENAYPQFKTNNSPSVRVGGFVSEKFNKVKHKRPMLSLSNAFDANDLRKFDQDNQNASVDLKGYVVEPKIDGLSISIIYKNAKLHQAITRGDGVNGEDVTSNILTIKDIPHYIDQKYKDYEIEVRGEVYMAFHDFYEMNDNLEESDKKFANPRNAAAGTLRSLDNSIVAERKLSAFMYYLVNAQELGIKTHYESIQFLKDNKFKVSDLIVKVDTIDEVINQIDRYTKVRNDLSYMIDGIVIKINNLEVYDEIGYTSKFPKWAIAYKFPANVVSSQLLEIINDVGRTGKISYVAKIKPILLDGSIVEYATLHNFDFIKEKDIRINDEIKIYKAGDVIPYVDGVDLSKRLANSVPYESITNCPSCQSVLVRENDEVDQRCLNIYGCKKINIEKIVYFVSRNCMNIEGMSDAIINKFYDANLIKNVADLYYLQKHKEFILASDFKIKDKSFSNLINSINNSKTRSLEFLLTAFGIRHVGPNLAKKLAKQFKTMTTLMHANFGELTNVDACGEKAALSLINWFNDDHNVSLVNQLQQVGVNMEYIDDFIYDDNINIIDEYKNKTFVITGSFSISRDEIKTILEKYYHAKVKNSVSKKTDYVLAGIEAGTKLEKAKLLGVKIIENEFWKKDNNF.

NAD(+)-binding positions include 32 to 36 (DHVYD), 81 to 82 (SL), and Glu111. Lys113 (N6-AMP-lysine intermediate) is an active-site residue. NAD(+)-binding residues include Arg134, Glu171, Lys286, and Lys310. The Zn(2+) site is built by Cys404, Cys407, Cys422, and Cys428. The 79-residue stretch at 595–673 (NIIDEYKNKT…NEFWKKDNNF (79 aa)) folds into the BRCT domain.

This sequence belongs to the NAD-dependent DNA ligase family. LigA subfamily. The cofactor is Mg(2+). Mn(2+) is required as a cofactor.

The enzyme catalyses NAD(+) + (deoxyribonucleotide)n-3'-hydroxyl + 5'-phospho-(deoxyribonucleotide)m = (deoxyribonucleotide)n+m + AMP + beta-nicotinamide D-nucleotide.. DNA ligase that catalyzes the formation of phosphodiester linkages between 5'-phosphoryl and 3'-hydroxyl groups in double-stranded DNA using NAD as a coenzyme and as the energy source for the reaction. It is essential for DNA replication and repair of damaged DNA. The sequence is that of DNA ligase from Ureaplasma urealyticum serovar 10 (strain ATCC 33699 / Western).